A 273-amino-acid chain; its full sequence is 4-hydroxy-tetrahydrodipicolinate reductase (273 aa).

Residue 12-17 participates in NAD(+) binding; sequence GANGRM. Arg-39 is a binding site for NADP(+). NAD(+)-binding positions include 102-104 and 126-129; these read GTT and AANF. The Proton donor/acceptor role is filled by His-159. His-160 lines the (S)-2,3,4,5-tetrahydrodipicolinate pocket. The active-site Proton donor is Lys-163. Residue 169 to 170 participates in (S)-2,3,4,5-tetrahydrodipicolinate binding; the sequence is GT.

The protein belongs to the DapB family. In terms of assembly, homotetramer.

It localises to the cytoplasm. It carries out the reaction (S)-2,3,4,5-tetrahydrodipicolinate + NAD(+) + H2O = (2S,4S)-4-hydroxy-2,3,4,5-tetrahydrodipicolinate + NADH + H(+). It catalyses the reaction (S)-2,3,4,5-tetrahydrodipicolinate + NADP(+) + H2O = (2S,4S)-4-hydroxy-2,3,4,5-tetrahydrodipicolinate + NADPH + H(+). It participates in amino-acid biosynthesis; L-lysine biosynthesis via DAP pathway; (S)-tetrahydrodipicolinate from L-aspartate: step 4/4. Its function is as follows. Catalyzes the conversion of 4-hydroxy-tetrahydrodipicolinate (HTPA) to tetrahydrodipicolinate. This Cronobacter sakazakii (strain ATCC BAA-894) (Enterobacter sakazakii) protein is 4-hydroxy-tetrahydrodipicolinate reductase.